A 300-amino-acid polypeptide reads, in one-letter code: UDP-N-acetylenolpyruvoylglucosamine reductase (300 aa).

Residues K28 to G193 enclose the FAD-binding PCMH-type domain. R172 is an active-site residue. Residue S222 is the Proton donor of the active site. E292 is a catalytic residue.

This sequence belongs to the MurB family. The cofactor is FAD.

The protein resides in the cytoplasm. The enzyme catalyses UDP-N-acetyl-alpha-D-muramate + NADP(+) = UDP-N-acetyl-3-O-(1-carboxyvinyl)-alpha-D-glucosamine + NADPH + H(+). Its pathway is cell wall biogenesis; peptidoglycan biosynthesis. Cell wall formation. The polypeptide is UDP-N-acetylenolpyruvoylglucosamine reductase (Enterococcus faecalis (strain ATCC 700802 / V583)).